The primary structure comprises 276 residues: 5-deoxy-glucuronate isomerase (276 aa).

It belongs to the isomerase IolB family.

The catalysed reaction is 5-deoxy-D-glucuronate = 5-dehydro-2-deoxy-D-gluconate. It functions in the pathway polyol metabolism; myo-inositol degradation into acetyl-CoA; acetyl-CoA from myo-inositol: step 4/7. Its function is as follows. Involved in the isomerization of 5-deoxy-glucuronate (5DG) to 5-dehydro-2-deoxy-D-gluconate (DKG or 2-deoxy-5-keto-D-gluconate). The polypeptide is 5-deoxy-glucuronate isomerase (Geobacillus kaustophilus (strain HTA426)).